A 131-amino-acid chain; its full sequence is Fumarate reductase subunit C (131 aa).

Helical transmembrane passes span E30–L50, F63–H83, and I109–L129.

It belongs to the FrdC family. Part of an enzyme complex containing four subunits: a flavoprotein (FrdA), an iron-sulfur protein (FrdB), and two hydrophobic anchor proteins (FrdC and FrdD).

The protein localises to the cell inner membrane. Two distinct, membrane-bound, FAD-containing enzymes are responsible for the catalysis of fumarate and succinate interconversion; fumarate reductase is used in anaerobic growth, and succinate dehydrogenase is used in aerobic growth. Anchors the catalytic components of the fumarate reductase complex to the cell inner membrane, binds quinones. This Shigella dysenteriae serotype 1 (strain Sd197) protein is Fumarate reductase subunit C.